Consider the following 380-residue polypeptide: Queuine tRNA-ribosyltransferase (380 aa).

The Proton acceptor role is filled by D96. Residues 96–100, D150, Q193, and G220 each bind substrate; that span reads DSGGF. Residues 251–257 form an RNA binding region; sequence GVGAPDS. Residue D270 is the Nucleophile of the active site. The interval 275–279 is RNA binding; important for wobble base 34 recognition; that stretch reads TRIAR. Residues C308, C310, C313, and H339 each coordinate Zn(2+).

Belongs to the queuine tRNA-ribosyltransferase family. In terms of assembly, homodimer. Within each dimer, one monomer is responsible for RNA recognition and catalysis, while the other monomer binds to the replacement base PreQ1. Zn(2+) serves as cofactor.

The enzyme catalyses 7-aminomethyl-7-carbaguanine + guanosine(34) in tRNA = 7-aminomethyl-7-carbaguanosine(34) in tRNA + guanine. It participates in tRNA modification; tRNA-queuosine biosynthesis. Functionally, catalyzes the base-exchange of a guanine (G) residue with the queuine precursor 7-aminomethyl-7-deazaguanine (PreQ1) at position 34 (anticodon wobble position) in tRNAs with GU(N) anticodons (tRNA-Asp, -Asn, -His and -Tyr). Catalysis occurs through a double-displacement mechanism. The nucleophile active site attacks the C1' of nucleotide 34 to detach the guanine base from the RNA, forming a covalent enzyme-RNA intermediate. The proton acceptor active site deprotonates the incoming PreQ1, allowing a nucleophilic attack on the C1' of the ribose to form the product. After dissociation, two additional enzymatic reactions on the tRNA convert PreQ1 to queuine (Q), resulting in the hypermodified nucleoside queuosine (7-(((4,5-cis-dihydroxy-2-cyclopenten-1-yl)amino)methyl)-7-deazaguanosine). This Streptococcus suis (strain 98HAH33) protein is Queuine tRNA-ribosyltransferase.